The chain runs to 178 residues: Large ribosomal subunit protein uL6 (178 aa).

Belongs to the universal ribosomal protein uL6 family. Part of the 50S ribosomal subunit.

In terms of biological role, this protein binds to the 23S rRNA, and is important in its secondary structure. It is located near the subunit interface in the base of the L7/L12 stalk, and near the tRNA binding site of the peptidyltransferase center. This is Large ribosomal subunit protein uL6 from Nautilia profundicola (strain ATCC BAA-1463 / DSM 18972 / AmH).